An 89-amino-acid chain; its full sequence is Small ribosomal subunit protein uS15 (89 aa).

It belongs to the universal ribosomal protein uS15 family. As to quaternary structure, part of the 30S ribosomal subunit. Forms a bridge to the 50S subunit in the 70S ribosome, contacting the 23S rRNA.

Functionally, one of the primary rRNA binding proteins, it binds directly to 16S rRNA where it helps nucleate assembly of the platform of the 30S subunit by binding and bridging several RNA helices of the 16S rRNA. Forms an intersubunit bridge (bridge B4) with the 23S rRNA of the 50S subunit in the ribosome. This Chromohalobacter salexigens (strain ATCC BAA-138 / DSM 3043 / CIP 106854 / NCIMB 13768 / 1H11) protein is Small ribosomal subunit protein uS15.